The sequence spans 638 residues: MKKTFYITTPIYYPSDKLHIGHSYTTVAADAMARFKRLTGYDVMFLTGTDEHGQKIQRIAREKGMSPKEYVDGIVEWIKDLWKTMDISYDHFIRTTDAYHEEIVQKIFMKLYEQGDIYKGEYEGWYCTPCESFWTESQLVDGKCPDCGRPVERVTEEGYFFRLSAYGDKLLKYYEEHPDFIQPESRRNEMINFIKAGLEDLFVSRSTFDWGIKVPFDPKHVIYVWIDALSNYITALGYMTENDEKFKKYWPADVHLVGKEIVRFHTIIWPAMLMALGLPLPKKVFGHGWLILEGGKMSKSKGNVVDPKELVDRYGVDAIRYFLLREVPFGADGVFSNEALINRINSDLANDLGNLLSRTVTMIEKYFDGVLPKPSSQEEIDEDLINVAQNLPQKVEEYMDKLQFSNALIEIWKLVSRANKYIDETMPWVLAKDESKRGRLGTVLYNLAESLRFIGILISPFMPNTPKKMFEQLGITEDLTTWESLKFGLLKEGTRVKRGEILFPRIDVEKELASLEKKTEEKTKETKEEKIDYITIEDFSKVQLRVAEILEAEKVEGSDKLIKMKLKVGEEIRQIVGGIGKYYSPEELIGKKIIIVYNLQPRKLMGIESQGMLLAATNEGKMALLTVDKDIESGSKIS.

Positions 12–22 (YYPSDKLHIGH) match the 'HIGH' region motif. Cys127, Cys130, Cys144, and Cys147 together coordinate Zn(2+). The short motif at 296 to 300 (KMSKS) is the 'KMSKS' region element. Lys299 lines the ATP pocket. One can recognise a tRNA-binding domain in the interval 538-638 (DFSKVQLRVA…KDIESGSKIS (101 aa)).

The protein belongs to the class-I aminoacyl-tRNA synthetase family. MetG type 2A subfamily. Homodimer. It depends on Zn(2+) as a cofactor.

It localises to the cytoplasm. It carries out the reaction tRNA(Met) + L-methionine + ATP = L-methionyl-tRNA(Met) + AMP + diphosphate. Its function is as follows. Is required not only for elongation of protein synthesis but also for the initiation of all mRNA translation through initiator tRNA(fMet) aminoacylation. This Caldanaerobacter subterraneus subsp. tengcongensis (strain DSM 15242 / JCM 11007 / NBRC 100824 / MB4) (Thermoanaerobacter tengcongensis) protein is Methionine--tRNA ligase (metG).